The chain runs to 178 residues: MPLSLRLSPSPTALSPTTGGFGPSRKQCRIPYSGVPTTKIGFCSLDSRKRGDSSVVRCSLETVNVSVGQVTEVDKDTFWPIVKAAGEKLVVLDMYTQWCGPCKVIAPKYKALSEKYDDVVFLKLDCNPDNRPLAKELGIRVVPTFKILKDNKVVKEVTGAKYDDLVAAIETARSAASG.

The tract at residues 1–22 (MPLSLRLSPSPTALSPTTGGFG) is disordered. The N-terminal 57 residues, 1 to 57 (MPLSLRLSPSPTALSPTTGGFGPSRKQCRIPYSGVPTTKIGFCSLDSRKRGDSSVVR), are a transit peptide targeting the chloroplast. The span at 7–18 (LSPSPTALSPTT) shows a compositional bias: polar residues. Positions 58–174 (CSLETVNVSV…LVAAIETARS (117 aa)) constitute a Thioredoxin domain. Catalysis depends on nucleophile residues C99 and C102. A disulfide bond links C99 and C102. C126 carries the S-glutathionyl cysteine; transient modification.

The protein belongs to the thioredoxin family. Plant F-type subfamily. In terms of processing, glutathionylation at Cys-126 decreases its ability to be reduced by ferredoxin-thioredoxin reductase and reduces its efficiency in activating target chloroplastic enzymes.

The protein localises to the plastid. The protein resides in the chloroplast stroma. Functionally, thiol-disulfide oxidoreductase involved in the redox regulation of enzymes of both reductive pentose phosphate pathway (Calvin-Benson cycle) and oxidative pentose phosphate pathway. Under light or reducing conditions, activates in chloroplast the glyceraldehyde-3-phosphate dehydrogenase, the phosphoribulokinase and the fructose-1,6-bisphosphate phosphatase, and inhibits the glucose-6-phosphate dehydrogenase. This is Thioredoxin F1, chloroplastic from Arabidopsis thaliana (Mouse-ear cress).